A 534-amino-acid polypeptide reads, in one-letter code: uncharacterized protein (534 aa).

2 helical membrane-spanning segments follow: residues 149–169 (ILTTLVTVGTTLGTPIFSITI) and 185–205 (VFLVIFSVFAIALGLVSSLIF).

The protein resides in the cell membrane. This is an uncharacterized protein from Mycoplasma pneumoniae (strain ATCC 29342 / M129 / Subtype 1) (Mycoplasmoides pneumoniae).